A 307-amino-acid chain; its full sequence is MSGFGAAALLSGSSAAAGTRSGSSDSLEKIDMSLDDIIKLNKKEERKQYSPKMKRGLQQNRTQQFRTPGSKWGIQQQKGYGKNHLGHRKKIVGKKRPYGVITGLAAKKAMGSHKGISPLNRQPLSEKNTQRNYPILKKKPNLQRQTEMQRKQIPALRRPAPLSRRIGNKLNQQKDTRQATFLFRRGLKVQAQVQPTEDLDNQAAKRTRQWRTSTTSGGILTVSIENPGAIITPISQKLRLTRTPVPPFLMKKDQSEEKKIPKGVPLQFDINSVGKQTGMTLNERFGILKEQRTALSQNKGSRFVTVG.

The segment covering Met1 to Asp25 has biased composition (low complexity). Disordered stretches follow at residues Met1 to Glu28 and Asn41 to Leu85. The UAP56-binding motif signature appears at Ser26–Glu44. Residues Leu57–Lys78 are compositionally biased toward polar residues.

Belongs to the UIF family. In terms of tissue distribution, widely expressed.

The protein resides in the nucleus. Its subcellular location is the nucleoplasm. It is found in the nucleus speckle. Required for mRNA export from the nucleus to the cytoplasm. Acts as an adapter that uses the DDX39B/UAP56-NFX1 pathway to ensure efficient mRNA export and delivering to the nuclear pore. The sequence is that of UAP56-interacting factor (FYTTD1) from Gallus gallus (Chicken).